The sequence spans 905 residues: Transcription termination factor 1 (905 aa).

2 stretches are compositionally biased toward basic and acidic residues: residues 1–16 (MEGE…PVSD) and 24–33 (IHKERPQKHS). The interval 1-33 (MEGESSRFEIHTPVSDKKKKKCSIHKERPQKHS) is disordered. Residues 1–223 (MEGESSRFEI…AHKNKSKKKK (223 aa)) are N-terminal region (NRD). Phosphoserine is present on serine 65. The segment at 151–443 (SHAHKSEALH…KSRPRQKKTQ (293 aa)) is disordered. 2 stretches are compositionally biased toward basic residues: residues 163–174 (VREKKNKKHQRK) and 215–226 (HKNKSKKKKKKS). Phosphoserine is present on serine 240. Threonine 248 is subject to Phosphothreonine. 3 stretches are compositionally biased toward basic residues: residues 270–283 (THKK…KKKS), 330–339 (NKSKKKKKKS), and 385–401 (TKKK…KRAR). Serine 403 carries the post-translational modification Phosphoserine. The segment covering 410 to 419 (PSKNSESTLF) has biased composition (polar residues). Tyrosine 476 bears the Phosphotyrosine mark. 3 positions are modified to phosphoserine: serine 478, serine 481, and serine 487. Residues 498-886 (LQEFIPNIKD…IEKESEGQAP (389 aa)) are may be involved in interaction with ARF. Myb-like domains are found at residues 612–661 (DVNN…SQIS) and 661–745 (SSQR…TEIL). Lysine 700 is covalently cross-linked (Glycyl lysine isopeptide (Lys-Gly) (interchain with G-Cter in SUMO2)). Phosphoserine is present on serine 872.

Oligomer. The oligomeric structure enables to interact simultaneously with two separate DNA fragments. Interacts with BAZ2A/TIP5. Interacts with CAVIN1. Interacts (via the N-terminal region (NRD) and a C-terminal region) with CDKN2A/ARF; the interaction is direct. Interacts (via C-terminal region) with NPM1/B23.

The protein localises to the nucleus. It localises to the nucleolus. It is found in the nucleoplasm. Functionally, multifunctional nucleolar protein that terminates ribosomal gene transcription, mediates replication fork arrest and regulates RNA polymerase I transcription on chromatin. Plays a dual role in rDNA regulation, being involved in both activation and silencing of rDNA transcription. Interaction with BAZ2A/TIP5 recovers DNA-binding activity. In Homo sapiens (Human), this protein is Transcription termination factor 1 (TTF1).